The sequence spans 477 residues: Ankyrin repeat, SAM and basic leucine zipper domain-containing protein 1 (477 aa).

A phosphoserine mark is found at serine 17, serine 18, and serine 20. ANK repeat units follow at residues 46 to 76 (EKKE…SVDA), 80 to 109 (YGWT…NASF), 112 to 146 (DKQT…DPNV), 150 to 179 (RLMT…EVNT), 183 to 212 (NGYT…NKML), and 216 to 245 (DGKL…PLEG). Positions 274 to 336 (SYAAFGDLEV…KILTALKELE (63 aa)) constitute an SAM domain.

Interacts with DDX4, PIWIL1, RANBP9 and TDRD1.

The protein resides in the cytoplasm. Its function is as follows. Plays a central role during spermatogenesis by repressing transposable elements and preventing their mobilization, which is essential for the germline integrity. Acts via the piRNA metabolic process, which mediates the repression of transposable elements during meiosis by forming complexes composed of piRNAs and Piwi proteins and governs the methylation and subsequent repression of transposons. Its association with pi-bodies suggests a participation in the primary piRNAs metabolic process. Required prior to the pachytene stage to facilitate the production of multiple types of piRNAs, including those associated with repeats involved in the regulation of retrotransposons. May act by mediating protein-protein interactions during germ cell maturation. The protein is Ankyrin repeat, SAM and basic leucine zipper domain-containing protein 1 (ASZ1) of Ateles geoffroyi (Black-handed spider monkey).